A 45-amino-acid chain; its full sequence is Cytochrome c6 (45 aa).

Heme c-binding residues include C12, C15, and H16.

The protein belongs to the cytochrome c family. PetJ subfamily. Monomer. In terms of processing, binds 1 heme c group covalently per subunit.

It is found in the cellular thylakoid lumen. Functionally, functions as an electron carrier between membrane-bound cytochrome b6-f and photosystem I in oxygenic photosynthesis. This is Cytochrome c6 (petJ) from Prochlorothrix hollandica.